The primary structure comprises 391 residues: Phosphoglycerate kinase (391 aa).

Substrate-binding positions include 21–23, arginine 36, 59–62, arginine 113, and arginine 146; these read DLN and HLGR. ATP is bound by residues lysine 197, glutamate 319, and 345–348; that span reads GGDT.

Belongs to the phosphoglycerate kinase family. Monomer.

It localises to the cytoplasm. The catalysed reaction is (2R)-3-phosphoglycerate + ATP = (2R)-3-phospho-glyceroyl phosphate + ADP. It functions in the pathway carbohydrate degradation; glycolysis; pyruvate from D-glyceraldehyde 3-phosphate: step 2/5. This chain is Phosphoglycerate kinase, found in Pseudoalteromonas atlantica (strain T6c / ATCC BAA-1087).